Consider the following 520-residue polypeptide: GMP synthase [glutamine-hydrolyzing] (520 aa).

The region spanning 12–205 (KIIVLDYGSQ…AISICGARGD (194 aa)) is the Glutamine amidotransferase type-1 domain. The active-site Nucleophile is C89. Catalysis depends on residues H179 and E181. Residues 206–395 (WSMDNFIDME…LGMPDEVVWR (190 aa)) form the GMPS ATP-PPase domain. Residue 233–239 (SGGVDSS) coordinates ATP.

Homodimer.

The catalysed reaction is XMP + L-glutamine + ATP + H2O = GMP + L-glutamate + AMP + diphosphate + 2 H(+). It participates in purine metabolism; GMP biosynthesis; GMP from XMP (L-Gln route): step 1/1. Catalyzes the synthesis of GMP from XMP. In Streptococcus equi subsp. zooepidemicus (strain H70), this protein is GMP synthase [glutamine-hydrolyzing].